The primary structure comprises 857 residues: DNA gyrase subunit A (857 aa).

One can recognise a Topo IIA-type catalytic domain in the interval leucine 39 to leucine 507. The active-site O-(5'-phospho-DNA)-tyrosine intermediate is tyrosine 127. The short motif at glutamine 534–glycine 540 is the GyrA-box element. Residues arginine 825–glutamate 857 form a disordered region. A compositionally biased stretch (acidic residues) spans glutamate 828–alanine 840.

Belongs to the type II topoisomerase GyrA/ParC subunit family. In terms of assembly, heterotetramer, composed of two GyrA and two GyrB chains. In the heterotetramer, GyrA contains the active site tyrosine that forms a transient covalent intermediate with DNA, while GyrB binds cofactors and catalyzes ATP hydrolysis.

It is found in the cytoplasm. It carries out the reaction ATP-dependent breakage, passage and rejoining of double-stranded DNA.. A type II topoisomerase that negatively supercoils closed circular double-stranded (ds) DNA in an ATP-dependent manner to modulate DNA topology and maintain chromosomes in an underwound state. Negative supercoiling favors strand separation, and DNA replication, transcription, recombination and repair, all of which involve strand separation. Also able to catalyze the interconversion of other topological isomers of dsDNA rings, including catenanes and knotted rings. Type II topoisomerases break and join 2 DNA strands simultaneously in an ATP-dependent manner. The protein is DNA gyrase subunit A of Streptomyces coelicolor (strain ATCC BAA-471 / A3(2) / M145).